The chain runs to 292 residues: Putative pyruvate, phosphate dikinase regulatory protein (292 aa).

155-162 (GVSRSSKT) provides a ligand contact to ADP.

It belongs to the pyruvate, phosphate/water dikinase regulatory protein family. PDRP subfamily.

It carries out the reaction N(tele)-phospho-L-histidyl/L-threonyl-[pyruvate, phosphate dikinase] + ADP = N(tele)-phospho-L-histidyl/O-phospho-L-threonyl-[pyruvate, phosphate dikinase] + AMP + H(+). It catalyses the reaction N(tele)-phospho-L-histidyl/O-phospho-L-threonyl-[pyruvate, phosphate dikinase] + phosphate + H(+) = N(tele)-phospho-L-histidyl/L-threonyl-[pyruvate, phosphate dikinase] + diphosphate. Bifunctional serine/threonine kinase and phosphorylase involved in the regulation of the pyruvate, phosphate dikinase (PPDK) by catalyzing its phosphorylation/dephosphorylation. This is Putative pyruvate, phosphate dikinase regulatory protein from Acidiphilium cryptum (strain JF-5).